Reading from the N-terminus, the 191-residue chain is ATP synthase subunit b 2 (191 aa).

Over residues 1-12 the composition is skewed to basic and acidic residues; that stretch reads MAESHGEAKGGE. Positions 1–31 are disordered; the sequence is MAESHGEAKGGEAKGTASAHTEAEGGHGFPP. A helical transmembrane segment spans residues 38–60; sequence PSQIASLVIAFVALYVIVSRVAL.

This sequence belongs to the ATPase B chain family. F-type ATPases have 2 components, F(1) - the catalytic core - and F(0) - the membrane proton channel. F(1) has five subunits: alpha(3), beta(3), gamma(1), delta(1), epsilon(1). F(0) has three main subunits: a(1), b(2) and c(10-14). The alpha and beta chains form an alternating ring which encloses part of the gamma chain. F(1) is attached to F(0) by a central stalk formed by the gamma and epsilon chains, while a peripheral stalk is formed by the delta and b chains.

The protein localises to the cell inner membrane. Functionally, f(1)F(0) ATP synthase produces ATP from ADP in the presence of a proton or sodium gradient. F-type ATPases consist of two structural domains, F(1) containing the extramembraneous catalytic core and F(0) containing the membrane proton channel, linked together by a central stalk and a peripheral stalk. During catalysis, ATP synthesis in the catalytic domain of F(1) is coupled via a rotary mechanism of the central stalk subunits to proton translocation. Its function is as follows. Component of the F(0) channel, it forms part of the peripheral stalk, linking F(1) to F(0). The b'-subunit is a diverged and duplicated form of b found in plants and photosynthetic bacteria. In Bradyrhizobium sp. (strain ORS 278), this protein is ATP synthase subunit b 2 (atpF2).